Consider the following 178-residue polypeptide: NADH-quinone oxidoreductase subunit B 1 (178 aa).

[4Fe-4S] cluster contacts are provided by Cys39, Cys40, Cys104, and Cys135.

The protein belongs to the complex I 20 kDa subunit family. In terms of assembly, NDH-1 is composed of 14 different subunits. Subunits NuoB, C, D, E, F, and G constitute the peripheral sector of the complex. The cofactor is [4Fe-4S] cluster.

Its subcellular location is the cell inner membrane. It carries out the reaction a quinone + NADH + 5 H(+)(in) = a quinol + NAD(+) + 4 H(+)(out). Its function is as follows. NDH-1 shuttles electrons from NADH, via FMN and iron-sulfur (Fe-S) centers, to quinones in the respiratory chain. The immediate electron acceptor for the enzyme in this species is believed to be a menaquinone. Couples the redox reaction to proton translocation (for every two electrons transferred, four hydrogen ions are translocated across the cytoplasmic membrane), and thus conserves the redox energy in a proton gradient. This is NADH-quinone oxidoreductase subunit B 1 from Cytophaga hutchinsonii (strain ATCC 33406 / DSM 1761 / CIP 103989 / NBRC 15051 / NCIMB 9469 / D465).